A 1110-amino-acid chain; its full sequence is Guanylate cyclase 2D (1110 aa).

Positions 1 to 66 are cleaved as a signal peptide; it reads MAGLQQGCHP…ADSLSLPAWA (66 aa). The Extracellular segment spans residues 67-475; sequence RETFTLGVLG…PNTLCIRGVQ (409 aa). A disulfide bridge links C121 with C149. N-linked (GlcNAc...) asparagine glycosylation is found at N304 and N374. A helical transmembrane segment spans residues 476 to 500; that stretch reads PLGSLLTLTITCVLALVGGFLAYFI. Over 501 to 1110 the chain is Cytoplasmic; that stretch reads RLGLQQLRLL…TGFAKLARVG (610 aa). The tract at residues 529–556 is disordered; it reads TPSRRRPHVDSGSESRSVVDGGSPQSVI. The region spanning 541–818 is the Protein kinase domain; the sequence is SESRSVVDGG…PSLDQIYTQF (278 aa). The interval 880-921 is interaction with NCALD; the sequence is MGTTVEPEYFDQVTIYFSDIVGFTTISALSEPIEVVGFLNDL. The Guanylate cyclase domain occupies 893–1023; the sequence is TIYFSDIVGF…DTVNTASRME (131 aa).

This sequence belongs to the adenylyl cyclase class-4/guanylyl cyclase family. As to quaternary structure, interacts (via the catalytic domain) with NCALD. Specifically expressed in a subpopulation of olfactory sensory neurons. Expressed in the cilia of the olfactory epithelium.

Its subcellular location is the cell projection. It is found in the cilium membrane. It catalyses the reaction GTP = 3',5'-cyclic GMP + diphosphate. With respect to regulation, activated by Ca(2+). Activated by NCALD in a Ca(2+)-dependent fashion. Functionally, functions as an olfactory receptor activated by a urine odorant, uroguanylin. Activated as well by the volatile semiochemicals carbon disulfide (CS2) and carbon dioxide (CO2). Has guanylate cyclase activity upon binding of the ligand. Activation of GUCY2D neurons leads to the cGMP-dependent activation of the CNGA3 channels, membrane depolarization and an increase in action potential frequency. Signaling pathways activated by GUCY2D may trigger social behaviors such as acquisition of food preference. The polypeptide is Guanylate cyclase 2D (Gucy2d) (Rattus norvegicus (Rat)).